The sequence spans 194 residues: Small ribosomal subunit protein uS7 (194 aa).

It belongs to the universal ribosomal protein uS7 family. As to quaternary structure, part of the 30S ribosomal subunit.

Functionally, one of the primary rRNA binding proteins, it binds directly to 16S rRNA where it nucleates assembly of the head domain of the 30S subunit. Is located at the subunit interface close to the decoding center. The polypeptide is Small ribosomal subunit protein uS7 (Sulfurisphaera tokodaii (strain DSM 16993 / JCM 10545 / NBRC 100140 / 7) (Sulfolobus tokodaii)).